The following is a 430-amino-acid chain: Enolase (430 aa).

Residue glutamine 163 coordinates (2R)-2-phosphoglycerate. Catalysis depends on glutamate 205, which acts as the Proton donor. Aspartate 242, glutamate 287, and aspartate 314 together coordinate Mg(2+). Lysine 339, arginine 368, serine 369, and lysine 390 together coordinate (2R)-2-phosphoglycerate. Lysine 339 functions as the Proton acceptor in the catalytic mechanism.

Belongs to the enolase family. Mg(2+) serves as cofactor.

The protein resides in the cytoplasm. It localises to the secreted. It is found in the cell surface. It catalyses the reaction (2R)-2-phosphoglycerate = phosphoenolpyruvate + H2O. Its pathway is carbohydrate degradation; glycolysis; pyruvate from D-glyceraldehyde 3-phosphate: step 4/5. Catalyzes the reversible conversion of 2-phosphoglycerate (2-PG) into phosphoenolpyruvate (PEP). It is essential for the degradation of carbohydrates via glycolysis. This is Enolase from Bacillus licheniformis (strain ATCC 14580 / DSM 13 / JCM 2505 / CCUG 7422 / NBRC 12200 / NCIMB 9375 / NCTC 10341 / NRRL NRS-1264 / Gibson 46).